A 212-amino-acid chain; its full sequence is Uridine kinase (212 aa).

Residue 13–20 (GASASGKS) coordinates ATP.

Belongs to the uridine kinase family.

Its subcellular location is the cytoplasm. It catalyses the reaction uridine + ATP = UMP + ADP + H(+). The enzyme catalyses cytidine + ATP = CMP + ADP + H(+). The protein operates within pyrimidine metabolism; CTP biosynthesis via salvage pathway; CTP from cytidine: step 1/3. It participates in pyrimidine metabolism; UMP biosynthesis via salvage pathway; UMP from uridine: step 1/1. This chain is Uridine kinase, found in Shewanella putrefaciens (strain CN-32 / ATCC BAA-453).